A 298-amino-acid polypeptide reads, in one-letter code: Tyrosine recombinase XerC (298 aa).

The 87-residue stretch at 2–88 folds into the Core-binding (CB) domain; the sequence is TDLHTDVERY…ALRSFFDWLV (87 aa). The Tyr recombinase domain occupies 109–288; sequence HLPKNIDVDD…DFQHLASVYD (180 aa). Catalysis depends on residues arginine 148, lysine 172, histidine 240, arginine 243, and histidine 266. Residue tyrosine 275 is the O-(3'-phospho-DNA)-tyrosine intermediate of the active site.

It belongs to the 'phage' integrase family. XerC subfamily. In terms of assembly, forms a cyclic heterotetrameric complex composed of two molecules of XerC and two molecules of XerD, in which XerC interacts with XerD via its C-terminal region, XerD interacts with XerC via its C-terminal region and so on.

Its subcellular location is the cytoplasm. With respect to regulation, ftsK may regulate the catalytic switch between XerC and XerD in the heterotetrameric complex during the two steps of the recombination process. Site-specific tyrosine recombinase, which acts by catalyzing the cutting and rejoining of the recombining DNA molecules. Binds cooperatively to specific DNA consensus sequences that are separated from XerD binding sites by a short central region, forming the heterotetrameric XerC-XerD complex that recombines DNA substrates. The complex is essential to convert dimers of the bacterial chromosome into monomers to permit their segregation at cell division. It also contributes to the segregational stability of plasmids. In the complex XerC specifically exchanges the top DNA strands. The protein is Tyrosine recombinase XerC of Shigella flexneri serotype 5b (strain 8401).